We begin with the raw amino-acid sequence, 121 residues long: Succinate dehydrogenase assembly factor 3, mitochondrial (121 aa).

The N-terminal 35 residues, 1–35, are a transit peptide targeting the mitochondrion; that stretch reads MRPSLVRLVRPRRPERKTSPILPPLKLYKALLRAH.

This sequence belongs to the complex I LYR family. SDHAF3 subfamily. In terms of assembly, interacts with the iron-sulfur protein subunit within the SDH catalytic dimer.

Its subcellular location is the mitochondrion matrix. Plays an essential role in the assembly of succinate dehydrogenase (SDH), an enzyme complex (also referred to as respiratory complex II) that is a component of both the tricarboxylic acid (TCA) cycle and the mitochondrial electron transport chain, and which couples the oxidation of succinate to fumarate with the reduction of ubiquinone (coenzyme Q) to ubiquinol. Promotes maturation of the iron-sulfur protein subunit of the SDH catalytic dimer, protecting it from the deleterious effects of oxidants. May act together with SDHAF1. The sequence is that of Succinate dehydrogenase assembly factor 3, mitochondrial from Debaryomyces hansenii (strain ATCC 36239 / CBS 767 / BCRC 21394 / JCM 1990 / NBRC 0083 / IGC 2968) (Yeast).